The chain runs to 769 residues: DNA gyrase subunit B (769 aa).

The Toprim domain occupies 414 to 528 (SEIYLVEGDS…NGHIYLAQPP (115 aa)). Mg(2+)-binding residues include Glu420, Asp493, and Asp495.

The protein belongs to the type II topoisomerase GyrB family. In terms of assembly, heterotetramer, composed of two GyrA and two GyrB chains. In the heterotetramer, GyrA contains the active site tyrosine that forms a transient covalent intermediate with DNA, while GyrB binds cofactors and catalyzes ATP hydrolysis. Requires Mg(2+) as cofactor. It depends on Mn(2+) as a cofactor. Ca(2+) serves as cofactor.

It localises to the cytoplasm. The enzyme catalyses ATP-dependent breakage, passage and rejoining of double-stranded DNA.. In terms of biological role, a type II topoisomerase that negatively supercoils closed circular double-stranded (ds) DNA in an ATP-dependent manner to modulate DNA topology and maintain chromosomes in an underwound state. Negative supercoiling favors strand separation, and DNA replication, transcription, recombination and repair, all of which involve strand separation. Also able to catalyze the interconversion of other topological isomers of dsDNA rings, including catenanes and knotted rings. Type II topoisomerases break and join 2 DNA strands simultaneously in an ATP-dependent manner. The protein is DNA gyrase subunit B of Campylobacter jejuni subsp. jejuni serotype O:2 (strain ATCC 700819 / NCTC 11168).